The primary structure comprises 288 residues: Oxaloacetate decarboxylase (288 aa).

Residue Ser-47 participates in substrate binding. Residue Asp-85 coordinates Mg(2+). Residues Arg-156 and His-232 each contribute to the substrate site.

It belongs to the isocitrate lyase/PEP mutase superfamily. Oxaloacetate decarboxylase family. As to quaternary structure, homotetramer; dimer of dimers. Requires Mg(2+) as cofactor.

It carries out the reaction oxaloacetate + H(+) = pyruvate + CO2. Catalyzes the decarboxylation of oxaloacetate into pyruvate. Seems to play a role in maintaining cellular concentrations of bicarbonate and pyruvate. This Bradyrhizobium sp. (strain BTAi1 / ATCC BAA-1182) protein is Oxaloacetate decarboxylase.